A 252-amino-acid polypeptide reads, in one-letter code: Flagellar L-ring protein (252 aa).

The first 25 residues, 1–25 (MSKSVPLQRIVLVAALMATGGLAGG), serve as a signal peptide directing secretion. The N-palmitoyl cysteine moiety is linked to residue C26. A lipid anchor (S-diacylglycerol cysteine) is attached at C26.

The protein belongs to the FlgH family. In terms of assembly, the basal body constitutes a major portion of the flagellar organelle and consists of four rings (L,P,S, and M) mounted on a central rod.

Its subcellular location is the cell outer membrane. It localises to the bacterial flagellum basal body. Functionally, assembles around the rod to form the L-ring and probably protects the motor/basal body from shearing forces during rotation. This chain is Flagellar L-ring protein, found in Rhodopseudomonas palustris (strain ATCC BAA-98 / CGA009).